The primary structure comprises 199 residues: 3-hexulose-6-phosphate isomerase (199 aa).

The 143-residue stretch at 44–186 folds into the SIS domain; sequence LARQIVQPGR…FQSLWDHTEV (143 aa). Substrate contacts are provided by residues Ser-62 and 101–106; that span reads SGSGTT. Glu-166 acts as the Proton acceptor in catalysis.

Belongs to the SIS family. PHI subfamily.

The catalysed reaction is D-arabino-hex-3-ulose 6-phosphate = beta-D-fructose 6-phosphate. The protein operates within one-carbon metabolism; formaldehyde assimilation via RuMP pathway; D-fructose 6-phosphate from D-ribulose 5-phosphate and formaldehyde: step 2/2. Catalyzes the isomerization between 3-hexulose 6-phosphate and fructose 6-phosphate. The sequence is that of 3-hexulose-6-phosphate isomerase (rmpB) from Mycobacterium gastri.